A 718-amino-acid chain; its full sequence is MQMGMAVLVLVIACGVLSVLFAIWAIRSVLAADQGTQRMQEIAEAIREGASAYLTRQYSTIAIVGIVVFLLAWYLLSLNAAMGFLIGAVLSGVTGFIGMHVSVRANVRTAQAASLSLAGGLELAFKSGAITGLLVAGLALLGVSVYYFVLTVWLGYAPADRTVIDSLVSLGFGASLISIFARLGGGIFTKGADVGGDLVGKVEAGIPEDDPRNPATIADNVGDNVGDCAGMAADLFETYAVTVVATMVLGAIFFHGSDALTNVMLYPLMICGACVITSIAGTFFVKLGVNGSIMGALYKGLIATGLLSIVGLGVANTLTVGWGEIGTVAGKSITGTNLFVCGLIGLIVTGLIVVITEYYTGTNKRPVNSIAQASVTGHGTNVIQGLAVSLESTALPAIVIVGGIISTYQLAGLFGTAIAVTAMLGIAGMIVALDAFGPVTDNAGGIAEMAGLDPEVRKATDALDAVGNTTKAVTKGYAIGSAGLGALVLFAAYSNDLAYFAANGQIYPYFADMGPVSFDLSNPYVVAGLIFGGLIPYLFGGMAMTAVGRAGGAVVQEVRRQFREKPGIMTGKERPDYARAVDLLTKAAIREMIIPSLLPVLAPIVVYFGVLLISGSKAAAFAALGASLLGVIINGLFVAISMTSGGGAWDNAKKSFEDGFTDADGVKHMKGSEAHKASVTGDTVGDPYKDTAGPAVNPAIKITNIVALLLLAVLAHMA.

6 helical membrane-spanning segments follow: residues 6-26, 61-81, 83-103, 112-132, 133-153, and 168-188; these read AVLVLVIACGVLSVLFAIWAI, IAIVGIVVFLLAWYLLSLNAA, GFLIGAVLSGVTGFIGMHVSV, AASLSLAGGLELAFKSGAITG, LLVAGLALLGVSVYYFVLTVW, and VSLGFGASLISIFARLGGGIF. Lys-190 contacts substrate. Mg(2+)-binding residues include Asp-193, Asp-197, Asn-220, and Asp-223. 6 consecutive transmembrane segments (helical) span residues 235-255, 265-285, 300-320, 335-355, 385-405, and 413-433; these read LFETYAVTVVATMVLGAIFFH, LYPLMICGACVITSIAGTFFV, GLIATGLLSIVGLGVANTLTV, GTNLFVCGLIGLIVTGLIVVI, GLAVSLESTALPAIVIVGGII, and LFGTAIAVTAMLGIAGMIVAL. A Mg(2+)-binding site is contributed by Asp-441. 4 helical membrane passes run 472–492, 524–544, 593–613, and 620–640; these read AVTKGYAIGSAGLGALVLFAA, YVVAGLIFGGLIPYLFGGMAM, IIPSLLPVLAPIVVYFGVLLI, and AFAALGASLLGVIINGLFVAI. Residues Asp-650, Asp-682, and Asp-686 each contribute to the Ca(2+) site. Lys-689 provides a ligand contact to substrate. A helical transmembrane segment spans residues 695–715; the sequence is AVNPAIKITNIVALLLLAVLA.

It belongs to the H(+)-translocating pyrophosphatase (TC 3.A.10) family. K(+)-insensitive subfamily. In terms of assembly, homodimer. It depends on Mg(2+) as a cofactor.

The protein resides in the cell inner membrane. The catalysed reaction is diphosphate + H2O + H(+)(in) = 2 phosphate + 2 H(+)(out). In terms of biological role, proton pump that utilizes the energy of pyrophosphate hydrolysis as the driving force for proton movement across the membrane. Generates a proton motive force. This chain is K(+)-insensitive pyrophosphate-energized proton pump, found in Brucella melitensis biotype 1 (strain ATCC 23456 / CCUG 17765 / NCTC 10094 / 16M).